We begin with the raw amino-acid sequence, 439 residues long: DNA 3'-5' translocase XPB2 (439 aa).

The tract at residues 1–54 is DRD domain; sequence MVYLRYFKGLILSDAYAPGLKWSDELKAYSALAFKYRDVRKYFLEKEIEVEENV. The 145-residue stretch at 77 to 221 folds into the Helicase ATP-binding domain; it reads VKAWLKEKRG…LYPILVGPIV (145 aa). ATP-binding positions include 90-97 and R127; that span reads LPTGAGKT. Residues 174 to 177 carry the DEAH box motif; the sequence is DEVH. The RED motif motif lies at 205-207; sequence RDD. The interval 227–234 is flexible hinge region; sequence EELAGKYI. The segment at 248–307 is thM region; it reads NEEKKRYDGLRKKLKDFLSSRGLKLQNLDDFHRLVKLAAKDKEAREALLAWHESLNIAVN. A Helicase C-terminal domain is found at 311–439; that stretch reads KIEKLREILQ…DYRLSRRRRE (129 aa).

Belongs to the helicase family. RAD25/XPB subfamily. Forms a heterodimer with Bax1.

The catalysed reaction is Couples ATP hydrolysis with the unwinding of duplex DNA by translocating in the 3'-5' direction.. It catalyses the reaction ATP + H2O = ADP + phosphate + H(+). In terms of biological role, ATP-dependent DNA translocase which moves along double-stranded DNA (dsDNA) in a 3'-5' direction, unwinding the DNA. The ThM domain grips the resulting 3'-ssDNA tail and functions as a wedge (particularly Phe-278), breaking dsDNA base pairs, probably using the energy from ATP hydrolysis to move along dsDNA. A DNA-dependent ATPase; double-stranded DNA (dsDNA) stimulates the activity more than single-stranded DNA (ssDNA), while Bax1 stimulates ATPase more. In an in vitro assay had no detectable helicase activity. Binds ssDNA better than dsDNA. Has very low ATPase activity that is stimulated by Bax1; dsDNA, Y-form DNA and a DNA substrate with a 6 base pair (bp) bubble in the center stimulate the XPB2-Bax1 ATPase activity about 10- 20-fold more than the absence of DNA. In an XPB2-Bax1-bubble DNA crystal (12 bp of dsDNA, a 6 base bubble and 6 bp of dsDNA) the short 6 bp arm is unwound. The 2 helicase and the ThM domains of XPB2 with the NTD and CRD domains of Bax1 encircle the DNA, forming a tunnel where the 12 bp dsDNA and the ds-ssDNA junction are located. The ThM domain is wedged between the ssDNA tails, with the 5' ssDNA contacting Bax1 and the 3' ssDNA in a channel in XPB2. Bax1 increases the affinity of XPB2 for forked DNA. The sequence is that of DNA 3'-5' translocase XPB2 from Sulfurisphaera tokodaii (strain DSM 16993 / JCM 10545 / NBRC 100140 / 7) (Sulfolobus tokodaii).